A 610-amino-acid polypeptide reads, in one-letter code: tRNA uridine 5-carboxymethylaminomethyl modification enzyme MnmG (610 aa).

Position 14–19 (14–19) interacts with FAD; that stretch reads GAGHAG. An NAD(+)-binding site is contributed by 274 to 288; sequence GPRYCPSIEDKIVKF.

The protein belongs to the MnmG family. In terms of assembly, homodimer. Heterotetramer of two MnmE and two MnmG subunits. The cofactor is FAD.

The protein localises to the cytoplasm. In terms of biological role, NAD-binding protein involved in the addition of a carboxymethylaminomethyl (cmnm) group at the wobble position (U34) of certain tRNAs, forming tRNA-cmnm(5)s(2)U34. This is tRNA uridine 5-carboxymethylaminomethyl modification enzyme MnmG from Chlamydia trachomatis serovar L2b (strain UCH-1/proctitis).